The sequence spans 430 residues: GTPase Obg (430 aa).

The 158-residue stretch at 1-158 folds into the Obg domain; sequence MFIDKAKIYL…LTVVLELKLI (158 aa). Residues 159–330 enclose the OBG-type G domain; sequence ADVGLVGFPN…LLSYVSKRLK (172 aa). GTP-binding positions include 165 to 172, 190 to 194, 212 to 215, 282 to 285, and 311 to 313; these read GFPNVGKS, FTTLT, DIPG, NKTD, and SAA. The Mg(2+) site is built by Ser-172 and Thr-192. An OCT domain is found at 351–430; it reads KYEETEDKYH…MYSVEFEYFN (80 aa).

Belongs to the TRAFAC class OBG-HflX-like GTPase superfamily. OBG GTPase family. As to quaternary structure, monomer. The cofactor is Mg(2+).

The protein localises to the cytoplasm. Its function is as follows. An essential GTPase which binds GTP, GDP and possibly (p)ppGpp with moderate affinity, with high nucleotide exchange rates and a fairly low GTP hydrolysis rate. Plays a role in control of the cell cycle, stress response, ribosome biogenesis and in those bacteria that undergo differentiation, in morphogenesis control. This chain is GTPase Obg, found in Alkaliphilus oremlandii (strain OhILAs) (Clostridium oremlandii (strain OhILAs)).